Consider the following 611-residue polypeptide: Polyphenol oxidase 4 (611 aa).

Cu cation is bound by residues H57, H82, H91, H251, H255, and H283. Positions 80–82 form a cross-link, 2'-(S-cysteinyl)-histidine (Cys-His); sequence CTH. H255 contributes to the substrate binding site. The propeptide at 380–611 is removed in mature form; the sequence is IKKSEGGKNP…GGLGALGRIF (232 aa).

Belongs to the tyrosinase family. In terms of assembly, heterotetramer. It depends on Cu(2+) as a cofactor. In terms of processing, the C-ter is probably cleaved after Gly-379 since the mature active protein is smaller than the protein encoded by the gene.

It catalyses the reaction 2 L-dopa + O2 = 2 L-dopaquinone + 2 H2O. The catalysed reaction is L-tyrosine + O2 = L-dopaquinone + H2O. Functionally, copper-containing oxidase that catalyzes both the o-hydroxylation of monophenols and the subsequent oxidation of the resulting o-diphenols into reactive o-quinones, which evolve spontaneously to produce intermediates, which associate in dark brown pigments. Involved in the initial step of melanin synthesis. Melanins constitute a mechanism of defense and resistance to stress such as UV radiations, free radicals, gamma rays, dehydratation and extreme temperatures, and contribute to the fungal cell-wall resistance against hydrolytic enzymes in avoiding cellular lysis. Fungal pigments are also involved in the formation and stability of spores. This Agaricus bisporus (White button mushroom) protein is Polyphenol oxidase 4 (PPO4).